A 101-amino-acid polypeptide reads, in one-letter code: Small ribosomal subunit protein uS14 (101 aa).

The protein belongs to the universal ribosomal protein uS14 family. Part of the 30S ribosomal subunit. Contacts proteins S3 and S10.

Functionally, binds 16S rRNA, required for the assembly of 30S particles and may also be responsible for determining the conformation of the 16S rRNA at the A site. This Aliivibrio salmonicida (strain LFI1238) (Vibrio salmonicida (strain LFI1238)) protein is Small ribosomal subunit protein uS14.